The chain runs to 77 residues: UPF0349 protein lwe2340 (77 aa).

The protein belongs to the UPF0349 family.

This chain is UPF0349 protein lwe2340, found in Listeria welshimeri serovar 6b (strain ATCC 35897 / DSM 20650 / CCUG 15529 / CIP 8149 / NCTC 11857 / SLCC 5334 / V8).